The sequence spans 343 residues: Phosphate acyltransferase (343 aa).

This sequence belongs to the PlsX family. Homodimer. Probably interacts with PlsY.

It localises to the cytoplasm. It catalyses the reaction a fatty acyl-[ACP] + phosphate = an acyl phosphate + holo-[ACP]. It participates in lipid metabolism; phospholipid metabolism. Functionally, catalyzes the reversible formation of acyl-phosphate (acyl-PO(4)) from acyl-[acyl-carrier-protein] (acyl-ACP). This enzyme utilizes acyl-ACP as fatty acyl donor, but not acyl-CoA. The protein is Phosphate acyltransferase of Neorickettsia sennetsu (strain ATCC VR-367 / Miyayama) (Ehrlichia sennetsu).